We begin with the raw amino-acid sequence, 953 residues long: Glycine dehydrogenase (decarboxylating) (953 aa).

Position 705 is an N6-(pyridoxal phosphate)lysine (lysine 705).

It belongs to the GcvP family. As to quaternary structure, the glycine cleavage system is composed of four proteins: P, T, L and H. The cofactor is pyridoxal 5'-phosphate.

It catalyses the reaction N(6)-[(R)-lipoyl]-L-lysyl-[glycine-cleavage complex H protein] + glycine + H(+) = N(6)-[(R)-S(8)-aminomethyldihydrolipoyl]-L-lysyl-[glycine-cleavage complex H protein] + CO2. Its function is as follows. The glycine cleavage system catalyzes the degradation of glycine. The P protein binds the alpha-amino group of glycine through its pyridoxal phosphate cofactor; CO(2) is released and the remaining methylamine moiety is then transferred to the lipoamide cofactor of the H protein. This chain is Glycine dehydrogenase (decarboxylating), found in Sodalis glossinidius (strain morsitans).